The sequence spans 103 residues: Co-chaperonin GroES (103 aa).

This sequence belongs to the GroES chaperonin family. As to quaternary structure, heptamer of 7 subunits arranged in a ring. Interacts with the chaperonin GroEL.

It is found in the cytoplasm. In terms of biological role, together with the chaperonin GroEL, plays an essential role in assisting protein folding. The GroEL-GroES system forms a nano-cage that allows encapsulation of the non-native substrate proteins and provides a physical environment optimized to promote and accelerate protein folding. GroES binds to the apical surface of the GroEL ring, thereby capping the opening of the GroEL channel. In Prochlorococcus marinus (strain MIT 9313), this protein is Co-chaperonin GroES.